Reading from the N-terminus, the 374-residue chain is Chaperone protein DnaJ (374 aa).

The J domain occupies 5–70 (CYYEILNVSK…GKRSRYDQFG (66 aa)). Residues 130–207 (GVEKEINIPR…CYGSGKIKKQ (78 aa)) form a CR-type zinc finger. 8 residues coordinate Zn(2+): Cys-143, Cys-146, Cys-159, Cys-162, Cys-181, Cys-184, Cys-195, and Cys-198. CXXCXGXG motif repeat units follow at residues 143 to 150 (CDSCDGTG), 159 to 166 (CHACHGQG), 181 to 188 (CPVCNGTG), and 195 to 202 (CDDCYGSG).

The protein belongs to the DnaJ family. As to quaternary structure, homodimer. Zn(2+) is required as a cofactor.

It is found in the cytoplasm. Its function is as follows. Participates actively in the response to hyperosmotic and heat shock by preventing the aggregation of stress-denatured proteins and by disaggregating proteins, also in an autonomous, DnaK-independent fashion. Unfolded proteins bind initially to DnaJ; upon interaction with the DnaJ-bound protein, DnaK hydrolyzes its bound ATP, resulting in the formation of a stable complex. GrpE releases ADP from DnaK; ATP binding to DnaK triggers the release of the substrate protein, thus completing the reaction cycle. Several rounds of ATP-dependent interactions between DnaJ, DnaK and GrpE are required for fully efficient folding. Also involved, together with DnaK and GrpE, in the DNA replication of plasmids through activation of initiation proteins. The sequence is that of Chaperone protein DnaJ from Francisella philomiragia subsp. philomiragia (strain ATCC 25017 / CCUG 19701 / FSC 153 / O#319-036).